We begin with the raw amino-acid sequence, 344 residues long: Ribosomal RNA large subunit methyltransferase Cfr (344 aa).

Glu-90 functions as the Proton acceptor in the catalytic mechanism. Residues 97-330 enclose the Radical SAM core domain; the sequence is KQGWESFCIS…ATVRTQFGSE (234 aa). The cysteines at positions 104 and 335 are disulfide-linked. Positions 111, 115, and 118 each coordinate [4Fe-4S] cluster. S-adenosyl-L-methionine is bound by residues 157–158, Ser-188, 211–213, and Asn-292; these read GE and SLH. The active-site S-methylcysteine intermediate is Cys-335.

Belongs to the radical SAM superfamily. RlmN family. Cfr subfamily. The cofactor is [4Fe-4S] cluster.

The protein resides in the cytoplasm. It carries out the reaction adenosine(2503) in 23S rRNA + 2 reduced [2Fe-2S]-[ferredoxin] + 2 S-adenosyl-L-methionine = 8-methyladenosine(2503) in 23S rRNA + 5'-deoxyadenosine + L-methionine + 2 oxidized [2Fe-2S]-[ferredoxin] + S-adenosyl-L-homocysteine. In terms of biological role, specifically methylates position 8 of adenine 2503 in 23S rRNA. Confers resistance to some classes of antibiotics. The sequence is that of Ribosomal RNA large subunit methyltransferase Cfr from Clostridium botulinum (strain Loch Maree / Type A3).